The primary structure comprises 76 residues: MEELILSIVKPLVDHPEDVVITPEETDTSLTYKLSVSKEDMGRVIGKQGRIAKAIRTLVYAVGSKNDKKIRLEIIE.

Residues serine 29–glutamate 76 form the KH domain.

Belongs to the KhpA RNA-binding protein family. Forms a complex with KhpB.

The protein localises to the cytoplasm. Functionally, a probable RNA chaperone. Forms a complex with KhpB which binds to cellular RNA and controls its expression. Plays a role in peptidoglycan (PG) homeostasis and cell length regulation. In Listeria innocua serovar 6a (strain ATCC BAA-680 / CLIP 11262), this protein is RNA-binding protein KhpA.